Consider the following 291-residue polypeptide: U7 snRNA-associated Sm-like protein LSm11 (291 aa).

The interval 55-84 is disordered; it reads ARGRARGAQRGQSRGPGGKRKGRKPEPDPE. The region spanning 124 to 199 is the Sm domain; that stretch reads SPLGELNRCV…LTLTRLFDRL (76 aa). Positions 155–289 are SM; sequence GFIVAFDKFW…RGENVLLVHI (135 aa). The segment at 203-266 is disordered; the sequence is EPGSHDPAKG…RRNRKEKVDY (64 aa). The segment covering 251–261 has biased composition (basic residues); sequence NRPKQRRRNRK.

The protein belongs to the snRNP Sm proteins family. As to quaternary structure, component of the heptameric ring U7 snRNP complex.

It localises to the nucleus. Its function is as follows. Component of the U7 snRNP complex that is involved in the histone 3'-end pre-mRNA processing. Increases U7 snRNA levels but not histone 3'-end pre-mRNA processing activity, when overexpressed. Binds specifically to the Sm-binding site of U7 snRNA. The sequence is that of U7 snRNA-associated Sm-like protein LSm11 from Xenopus laevis (African clawed frog).